The sequence spans 195 residues: Peptidyl-tRNA hydrolase (195 aa).

Y17 serves as a coordination point for tRNA. The active-site Proton acceptor is the H22. Positions 68, 70, and 116 each coordinate tRNA.

Belongs to the PTH family. As to quaternary structure, monomer.

The protein localises to the cytoplasm. The enzyme catalyses an N-acyl-L-alpha-aminoacyl-tRNA + H2O = an N-acyl-L-amino acid + a tRNA + H(+). Its function is as follows. Hydrolyzes ribosome-free peptidyl-tRNAs (with 1 or more amino acids incorporated), which drop off the ribosome during protein synthesis, or as a result of ribosome stalling. Functionally, catalyzes the release of premature peptidyl moieties from peptidyl-tRNA molecules trapped in stalled 50S ribosomal subunits, and thus maintains levels of free tRNAs and 50S ribosomes. The sequence is that of Peptidyl-tRNA hydrolase from Pectobacterium carotovorum subsp. carotovorum (strain PC1).